The sequence spans 474 residues: 3-isopropylmalate dehydratase large subunit (474 aa).

Residues Cys-353, Cys-414, and Cys-417 each coordinate [4Fe-4S] cluster.

It belongs to the aconitase/IPM isomerase family. LeuC type 1 subfamily. In terms of assembly, heterodimer of LeuC and LeuD. Requires [4Fe-4S] cluster as cofactor.

The enzyme catalyses (2R,3S)-3-isopropylmalate = (2S)-2-isopropylmalate. The protein operates within amino-acid biosynthesis; L-leucine biosynthesis; L-leucine from 3-methyl-2-oxobutanoate: step 2/4. Functionally, catalyzes the isomerization between 2-isopropylmalate and 3-isopropylmalate, via the formation of 2-isopropylmaleate. This Teredinibacter turnerae (strain ATCC 39867 / T7901) protein is 3-isopropylmalate dehydratase large subunit.